We begin with the raw amino-acid sequence, 64 residues long: Bubble protein (64 aa).

4 disulfides stabilise this stretch: Cys3/Cys30, Cys18/Cys38, Cys28/Cys54, and Cys49/Cys64.

It is found in the secreted. May act as a toxin. May recognize a molecule or part of a molecule with a negatively charged surface potential. The protein is Bubble protein of Penicillium brevicompactum.